A 488-amino-acid chain; its full sequence is Prostaglandin E2 receptor EP4 subtype (488 aa).

The Extracellular portion of the chain corresponds to 1–19 (MSTPVANASASSMPELLNN). Asparagine 7 is a glycosylation site (N-linked (GlcNAc...) asparagine). Residues 20–43 (PVTIPAVMFIFGVVGNLVAIVVLC) form a helical membrane-spanning segment. At 44 to 55 (KSRKEQKETTFY) the chain is on the cytoplasmic side. The chain crosses the membrane as a helical span at residues 56–79 (TLVCGLAVTDLLGTLLVSPVTIAT). At 80–96 (YMKGQWPGGQALCDYST) the chain is on the extracellular side. Cysteine 92 and cysteine 170 are joined by a disulfide. The helical transmembrane segment at 97-115 (FILLFFGLSGLSIICAMSI) threads the bilayer. The Cytoplasmic segment spans residues 116-135 (ERYLAINHAYFYSHYVDKRL). A helical transmembrane segment spans residues 136–160 (AGLTLFAVYASNVLFCALPNMGLGR). Residues 161–184 (SRLQFPDTWCFIDWRTNVTAHAAF) are Extracellular-facing. N-linked (GlcNAc...) asparagine glycosylation is present at asparagine 177. A helical transmembrane segment spans residues 185–211 (SYMYAGFSSFLILATVLCNVLVCGALL). Residues 212–270 (RMHRQFMRRTSLGTEQHHAAAAAAVTSAACRGHPTASPALPRLSDFRRRRSFRRIAGAE) are Cytoplasmic-facing. A helical membrane pass occupies residues 271-298 (IQMVILLIATSLVVLICSIPLVVRVFIN). At 299–315 (QLYQPDLVREISQNPDL) the chain is on the extracellular side. The chain crosses the membrane as a helical span at residues 316–335 (QAIRIASVNPILDPWIYILL). Residues 336 to 488 (RKTVLSKAIE…ETLNLSEKCI (153 aa)) lie on the Cytoplasmic side of the membrane. Over residues 358–371 (RRDRSGQHCSDSRR) the composition is skewed to basic and acidic residues. A disordered region spans residues 358–381 (RRDRSGQHCSDSRRTSSAMSTHSR). A compositionally biased stretch (polar residues) spans 372 to 381 (TSSAMSTHSR). Phosphoserine occurs at positions 377, 380, 382, and 385. Positions 456 to 475 (EVGGGGRAGPTPKGSSLQVT) are disordered.

Belongs to the G-protein coupled receptor 1 family. In terms of assembly, interacts with FEM1A. Post-translationally, phosphorylation mediates agonist-mediated desensitization by promoting cytoplasmic retention. As to expression, highly expressed in intestine, duodenal epithelium, uterus, thymus and adrenal cortex. Lower but significant expression in whole adrenal, lung, spleen, stomach, and kidney. In this latter organ, the receptor is localized in the glomeruli and the transitional epithelium of the renal calyx.

The protein resides in the cell membrane. Receptor for prostaglandin E2 (PGE2). The activity of this receptor is mediated by G(s) proteins that stimulate adenylate cyclase. Has a relaxing effect on smooth muscle. May play an important role in regulating renal hemodynamics, intestinal epithelial transport, adrenal aldosterone secretion, and uterine function. The protein is Prostaglandin E2 receptor EP4 subtype (PTGER4) of Oryctolagus cuniculus (Rabbit).